We begin with the raw amino-acid sequence, 165 residues long: UPF0114 protein in repA1-repA2 intergenic region (165 aa).

Transmembrane regions (helical) follow at residues 15–35, 53–73, and 136–156; these read LMFP…VKFF, LVLI…LVMV, and IMWC…MAYI.

It belongs to the UPF0114 family.

It localises to the cell membrane. The polypeptide is UPF0114 protein in repA1-repA2 intergenic region (Buchnera aphidicola subsp. Thelaxes suberi).